The primary structure comprises 233 residues: 2,3,4,5-tetrahydropyridine-2,6-dicarboxylate N-acetyltransferase (233 aa).

The protein belongs to the transferase hexapeptide repeat family. DapH subfamily.

It catalyses the reaction (S)-2,3,4,5-tetrahydrodipicolinate + acetyl-CoA + H2O = L-2-acetamido-6-oxoheptanedioate + CoA. It functions in the pathway amino-acid biosynthesis; L-lysine biosynthesis via DAP pathway; LL-2,6-diaminopimelate from (S)-tetrahydrodipicolinate (acetylase route): step 1/3. In terms of biological role, catalyzes the transfer of an acetyl group from acetyl-CoA to tetrahydrodipicolinate. This Enterococcus faecalis (strain ATCC 700802 / V583) protein is 2,3,4,5-tetrahydropyridine-2,6-dicarboxylate N-acetyltransferase.